We begin with the raw amino-acid sequence, 313 residues long: Olfactory receptor 6E1 (313 aa).

Asparagine 3 carries an N-linked (GlcNAc...) asparagine glycan. A run of 7 helical transmembrane segments spans residues 25-45 (IFLGFLLTYFLILLGNFLIIF), 64-84 (FAMLEIWFTSVIFPKMLTNII), 96-116 (FLQAFLYFFLGTTEFFLLAVM), 142-162 (LVFCSWMSGLLLIIVPSSIVF), 192-212 (LVEFLGFVIANFSLLGTLAVT), 238-258 (TCSSHIIVVSLFYGSCIFMYV), and 271-291 (KVVALLNTVVTPTLNPFIYTL). A disulfide bridge links cysteine 95 with cysteine 177.

This sequence belongs to the G-protein coupled receptor 1 family.

It is found in the cell membrane. In terms of biological role, odorant receptor. Activated by (-)-citronellal and to a lesser extent by (+)-citronellal. Not activated by carvone or limonene. This Mus musculus (Mouse) protein is Olfactory receptor 6E1.